Consider the following 351-residue polypeptide: Dihydroorotate dehydrogenase (quinone) (351 aa).

FMN is bound by residues 65-69 (AGLDK) and Thr-89. Lys-69 is a substrate binding site. 114–118 (NRLGF) provides a ligand contact to substrate. FMN contacts are provided by Asn-150 and Asn-183. Residue Asn-183 coordinates substrate. The Nucleophile role is filled by Ser-186. Asn-188 is a substrate binding site. The FMN site is built by Lys-228 and Thr-256. 257–258 (NT) is a substrate binding site. FMN is bound by residues Gly-279, Gly-308, and 329-330 (YT).

The protein belongs to the dihydroorotate dehydrogenase family. Type 2 subfamily. In terms of assembly, monomer. FMN serves as cofactor.

It is found in the cell membrane. It catalyses the reaction (S)-dihydroorotate + a quinone = orotate + a quinol. The protein operates within pyrimidine metabolism; UMP biosynthesis via de novo pathway; orotate from (S)-dihydroorotate (quinone route): step 1/1. Functionally, catalyzes the conversion of dihydroorotate to orotate with quinone as electron acceptor. This is Dihydroorotate dehydrogenase (quinone) from Acidovorax ebreus (strain TPSY) (Diaphorobacter sp. (strain TPSY)).